The sequence spans 62 residues: Large ribosomal subunit protein bL32 (62 aa).

A compositionally biased stretch (basic residues) spans 1–19; that stretch reads MPNPKRRHSKARTGNRRAH. Residues 1 to 23 form a disordered region; that stretch reads MPNPKRRHSKARTGNRRAHDHLS.

This sequence belongs to the bacterial ribosomal protein bL32 family.

In Koribacter versatilis (strain Ellin345), this protein is Large ribosomal subunit protein bL32.